A 314-amino-acid polypeptide reads, in one-letter code: 4-hydroxy-3-methylbut-2-enyl diphosphate reductase (314 aa).

Cys12 is a [4Fe-4S] cluster binding site. Positions 41 and 74 each coordinate (2E)-4-hydroxy-3-methylbut-2-enyl diphosphate. The dimethylallyl diphosphate site is built by His41 and His74. Residues His41 and His74 each contribute to the isopentenyl diphosphate site. Cys96 lines the [4Fe-4S] cluster pocket. His124 contacts (2E)-4-hydroxy-3-methylbut-2-enyl diphosphate. Residue His124 participates in dimethylallyl diphosphate binding. His124 is an isopentenyl diphosphate binding site. Glu126 acts as the Proton donor in catalysis. Residue Thr167 participates in (2E)-4-hydroxy-3-methylbut-2-enyl diphosphate binding. Cys197 is a [4Fe-4S] cluster binding site. Ser225, Ser226, Asn227, and Ser269 together coordinate (2E)-4-hydroxy-3-methylbut-2-enyl diphosphate. Ser225, Ser226, Asn227, and Ser269 together coordinate dimethylallyl diphosphate. The isopentenyl diphosphate site is built by Ser225, Ser226, Asn227, and Ser269.

It belongs to the IspH family. Requires [4Fe-4S] cluster as cofactor.

It carries out the reaction isopentenyl diphosphate + 2 oxidized [2Fe-2S]-[ferredoxin] + H2O = (2E)-4-hydroxy-3-methylbut-2-enyl diphosphate + 2 reduced [2Fe-2S]-[ferredoxin] + 2 H(+). The enzyme catalyses dimethylallyl diphosphate + 2 oxidized [2Fe-2S]-[ferredoxin] + H2O = (2E)-4-hydroxy-3-methylbut-2-enyl diphosphate + 2 reduced [2Fe-2S]-[ferredoxin] + 2 H(+). It participates in isoprenoid biosynthesis; dimethylallyl diphosphate biosynthesis; dimethylallyl diphosphate from (2E)-4-hydroxy-3-methylbutenyl diphosphate: step 1/1. The protein operates within isoprenoid biosynthesis; isopentenyl diphosphate biosynthesis via DXP pathway; isopentenyl diphosphate from 1-deoxy-D-xylulose 5-phosphate: step 6/6. Its function is as follows. Catalyzes the conversion of 1-hydroxy-2-methyl-2-(E)-butenyl 4-diphosphate (HMBPP) into a mixture of isopentenyl diphosphate (IPP) and dimethylallyl diphosphate (DMAPP). Acts in the terminal step of the DOXP/MEP pathway for isoprenoid precursor biosynthesis. This is 4-hydroxy-3-methylbut-2-enyl diphosphate reductase from Pseudoalteromonas atlantica (strain T6c / ATCC BAA-1087).